A 337-amino-acid polypeptide reads, in one-letter code: Tetraacyldisaccharide 4'-kinase (337 aa).

55–62 (TIGGNGKT) contributes to the ATP binding site.

Belongs to the LpxK family.

The enzyme catalyses a lipid A disaccharide + ATP = a lipid IVA + ADP + H(+). The protein operates within glycolipid biosynthesis; lipid IV(A) biosynthesis; lipid IV(A) from (3R)-3-hydroxytetradecanoyl-[acyl-carrier-protein] and UDP-N-acetyl-alpha-D-glucosamine: step 6/6. In terms of biological role, transfers the gamma-phosphate of ATP to the 4'-position of a tetraacyldisaccharide 1-phosphate intermediate (termed DS-1-P) to form tetraacyldisaccharide 1,4'-bis-phosphate (lipid IVA). The polypeptide is Tetraacyldisaccharide 4'-kinase (Blochmanniella pennsylvanica (strain BPEN)).